A 272-amino-acid polypeptide reads, in one-letter code: Putative phosphoenolpyruvate synthase regulatory protein (272 aa).

ADP is bound at residue 152–159 (GVSRCGKT).

The protein belongs to the pyruvate, phosphate/water dikinase regulatory protein family. PSRP subfamily.

It carries out the reaction [pyruvate, water dikinase] + ADP = [pyruvate, water dikinase]-phosphate + AMP + H(+). It catalyses the reaction [pyruvate, water dikinase]-phosphate + phosphate + H(+) = [pyruvate, water dikinase] + diphosphate. Functionally, bifunctional serine/threonine kinase and phosphorylase involved in the regulation of the phosphoenolpyruvate synthase (PEPS) by catalyzing its phosphorylation/dephosphorylation. This chain is Putative phosphoenolpyruvate synthase regulatory protein, found in Pseudomonas fluorescens (strain SBW25).